Here is an 864-residue protein sequence, read N- to C-terminus: Protein 4.1 (864 aa).

Composition is skewed to polar residues over residues 1–16 (MTTEKSLVTEAENSQH) and 27–41 (NSGQQEPQQEESCQT). 3 disordered regions span residues 1 to 122 (MTTE…GTSL), 136 to 170 (EPELKTDPSLDLHSLSSAETQPAQEELREDPDFEI), and 182 to 202 (IEVKEESPQSKAETELKASQK). Ser-14 is modified (phosphoserine). Thr-60 is subject to Phosphothreonine; by CDK1. The span at 61 to 75 (PTHEDLTKNKERTSE) shows a compositional bias: basic and acidic residues. The segment covering 76-87 (SRGLSRLFSSFL) has biased composition (low complexity). Ser-84, Ser-85, Ser-95, Ser-104, Ser-121, Ser-149, Ser-151, Ser-152, Ser-188, and Ser-191 each carry phosphoserine. Residues 101–117 (EVESDKEKGEGGQKEIE) show a composition bias toward basic and acidic residues. The segment covering 149 to 158 (SLSSAETQPA) has biased composition (polar residues). The span at 182 to 199 (IEVKEESPQSKAETELKA) shows a compositional bias: basic and acidic residues. Residues 210-491 (MHCKVSLLDD…EHHTFFRLTS (282 aa)) enclose the FERM domain. The residue at position 222 (Tyr-222) is a Phosphotyrosine. The residue at position 378 (Thr-378) is a Phosphothreonine. The hydrophilic stretch occupies residues 494-614 (TIPKSKFLAL…QAEPEPTEAW (121 aa)). 2 disordered regions span residues 518-572 (RQAS…VAEG) and 586-611 (KAQKETVKAEVKKEDEPPEQAEPEPT). Residues Ser-521, Ser-540, Ser-542, and Ser-555 each carry the phosphoserine modification. A compositionally biased stretch (basic and acidic residues) spans 587 to 600 (AQKETVKAEVKKED). Acidic residues predominate over residues 601–610 (EPPEQAEPEP). A spectrin--actin-binding region spans residues 615-713 (KVEKTHIEVT…WDKRLSTHSP (99 aa)). Phosphotyrosine; by EGFR is present on Tyr-660. Residues Ser-664, Ser-674, Ser-684, and Ser-709 each carry the phosphoserine modification. Phosphoserine; by CDK1 is present on Ser-712. Residues 714 to 864 (FRTLNINGQI…VHQETEIADE (151 aa)) form a C-terminal (CTD) region. A phosphothreonine mark is found at Thr-736 and Thr-859.

In terms of assembly, binds with a high affinity to glycophorin and with lower affinity to band III protein. Associates with the nuclear mitotic apparatus. Interacts with calmodulin. Interacts with CPAP. Interacts with DLG1. Also found to associate with contractile apparatus and tight junctions. Interacts with NUMA1; this interaction is negatively regulated by CDK1 during metaphase and promotes anaphase-specific localization of NUMA1 in symmetrically dividing cells. Interacts with ATP2B1; regulates small intestinal calcium absorption through regulation of membrane expression of ATP2B1. In terms of processing, phosphorylated at multiple sites by different protein kinases and each phosphorylation event selectively modulates the protein's functions. Phosphorylation on Tyr-660 reduces the ability of 4.1 to promote the assembly of the spectrin/actin/4.1 ternary complex. Post-translationally, O-glycosylated; contains N-acetylglucosamine side chains in the C-terminal domain.

The protein resides in the cytoplasm. It is found in the cytoskeleton. It localises to the cell cortex. The protein localises to the nucleus. Protein 4.1 is a major structural element of the erythrocyte membrane skeleton. It plays a key role in regulating membrane physical properties of mechanical stability and deformability by stabilizing spectrin-actin interaction. Recruits DLG1 to membranes. Required for dynein-dynactin complex and NUMA1 recruitment at the mitotic cell cortex during anaphase. This is Protein 4.1 from Homo sapiens (Human).